The sequence spans 496 residues: DEAD-box ATP-dependent RNA helicase 38 (496 aa).

The interval 1-91 (MADTVEKVPT…SGDTPYTSAS (91 aa)) is disordered. At Ala2 the chain carries N-acetylalanine. Residues 7-25 (KVPTVVESSSSSTVEASNS) are compositionally biased toward low complexity. The span at 27 to 40 (EKTEPTTEKKKWGD) shows a compositional bias: basic and acidic residues. Residues 41 to 51 (VEDDDDEEEAV) show a composition bias toward acidic residues. Residues 78 to 91 (KAVTSGDTPYTSAS) show a composition bias toward polar residues. The Q motif signature appears at 91 to 120 (SRFEDLNLSPELMKGLYVEMKFEKPSKIQA). The Helicase ATP-binding domain maps to 125–301 (MIMTPPHKHL…ARTVKDPNQL (177 aa)). Residue 138 to 145 (AHNGSGKT) participates in ATP binding. The DEAD box motif lies at 245-248 (DEAD). The 155-residue stretch at 329 to 483 (VIKDQIMELG…EIKSWNSEEE (155 aa)) folds into the Helicase C-terminal domain.

The protein belongs to the DEAD box helicase family. DDX19/DBP5 subfamily. As to quaternary structure, interacts with NUP214 (via N-terminus). Constitutively expressed.

The protein localises to the cytoplasm. Its subcellular location is the nucleus. The enzyme catalyses ATP + H2O = ADP + phosphate + H(+). In terms of biological role, ATP-dependent RNA helicase essential for mRNA export from the nucleus. Plays an important role in the positive regulation of CBF/DREB transcription factors. This chain is DEAD-box ATP-dependent RNA helicase 38 (RH38), found in Arabidopsis thaliana (Mouse-ear cress).